We begin with the raw amino-acid sequence, 127 residues long: Large ribosomal subunit protein bL19 (127 aa).

Belongs to the bacterial ribosomal protein bL19 family.

This protein is located at the 30S-50S ribosomal subunit interface and may play a role in the structure and function of the aminoacyl-tRNA binding site. This is Large ribosomal subunit protein bL19 from Myxococcus xanthus (strain DK1622).